The chain runs to 360 residues: 3-isopropylmalate dehydrogenase (360 aa).

An NAD(+)-binding site is contributed by 76-89; sequence GPKWDKLDMAIRPE. The substrate site is built by R96, R106, R134, and D224. Mg(2+)-binding residues include D224, D248, and D252. NAD(+) is bound at residue 282–294; sequence GSAPDIAGQNMAN.

The protein belongs to the isocitrate and isopropylmalate dehydrogenases family. LeuB type 1 subfamily. Homodimer. It depends on Mg(2+) as a cofactor. Mn(2+) serves as cofactor.

It is found in the cytoplasm. The catalysed reaction is (2R,3S)-3-isopropylmalate + NAD(+) = 4-methyl-2-oxopentanoate + CO2 + NADH. It participates in amino-acid biosynthesis; L-leucine biosynthesis; L-leucine from 3-methyl-2-oxobutanoate: step 3/4. In terms of biological role, catalyzes the oxidation of 3-carboxy-2-hydroxy-4-methylpentanoate (3-isopropylmalate) to 3-carboxy-4-methyl-2-oxopentanoate. The product decarboxylates to 4-methyl-2 oxopentanoate. This is 3-isopropylmalate dehydrogenase from Hahella chejuensis (strain KCTC 2396).